Consider the following 250-residue polypeptide: DNA polymerase sliding clamp (250 aa).

It belongs to the PCNA family. As to quaternary structure, homotrimer. The subunits circularize to form a toroid; DNA passes through its center. Replication factor C (RFC) is required to load the toroid on the DNA.

Its function is as follows. Sliding clamp subunit that acts as a moving platform for DNA processing. Responsible for tethering the catalytic subunit of DNA polymerase and other proteins to DNA during high-speed replication. The chain is DNA polymerase sliding clamp from Methanococcus maripaludis (strain C6 / ATCC BAA-1332).